We begin with the raw amino-acid sequence, 430 residues long: Adenylosuccinate synthetase (430 aa).

Residues 12–18 (GDEGKGK) and 40–42 (GHT) each bind GTP. The active-site Proton acceptor is aspartate 13. Positions 13 and 40 each coordinate Mg(2+). Residues 13-16 (DEGK), 38-41 (NAGH), threonine 130, arginine 144, glutamine 225, threonine 240, and arginine 304 contribute to the IMP site. The Proton donor role is filled by histidine 41. 300–306 (STTGRPR) serves as a coordination point for substrate. Residues arginine 306, 332 to 334 (KLD), and 414 to 416 (SVG) each bind GTP.

Belongs to the adenylosuccinate synthetase family. In terms of assembly, homodimer. Requires Mg(2+) as cofactor.

The protein resides in the cytoplasm. It carries out the reaction IMP + L-aspartate + GTP = N(6)-(1,2-dicarboxyethyl)-AMP + GDP + phosphate + 2 H(+). Its pathway is purine metabolism; AMP biosynthesis via de novo pathway; AMP from IMP: step 1/2. Plays an important role in the de novo pathway of purine nucleotide biosynthesis. Catalyzes the first committed step in the biosynthesis of AMP from IMP. This is Adenylosuccinate synthetase from Pelobacter propionicus (strain DSM 2379 / NBRC 103807 / OttBd1).